The following is a 783-amino-acid chain: MWIKLLFFFTTLLVSTSGLGDDGITALLDPNSTEFSTVLPSNNSEKFSYMLASVKNMNMTASEFEEFIKVLKHRQSKDHSGEHVGNEHDESHGISVVSWHWDYVKNELVLTLFFIVIGLFKLVYHHTFVTRKILPESCCLIFIGIAIGFFFVGDATHASIKFLEFKSKVFFFYLLPPIILESAYSLKDRAFIENIGTILLYAVVGTILNIVLLAAALLILIWVGIMGKYNLSVMDILTFASLVAAVDPVAVLAVFQEVGVNKMLYFMVFGESLFNDAVTIVCYNLAIEFQTLPDFTWYHGFLGLLSFLCVSIGGLIIGLICGAISSFVTKFTTDVRVVEPVVLFGMAYLAYLGSEMFHFSGIIALIACGLFQTHYACCNISYKSFTSVMYITKVCSTLCESLIFIILGVMLVNEREWFWTDWHPVFSAVSVVLCVVVRFGVTFFLTYFVNQFTGGVRHISFQEQFIMSYGGLRGAVSFSLVFMISANPDVKNTMLGATYAVILFTNIIQGSTIKLFVKWLNIRLAKKEDHFRLFIEFNNGMVQHLSQGIEDLCGDKSLSLINRMSELSKKYVRPLLEKNYTANKAKKEGKLVELNRAVAMREALNNSPSQSSFQRQHTIDEMAESGALPHDLLDEEHQGHHHHGQVHPDNEDADQRANELIKDVSSIRQLMHNPFEDCYLDRNLTHEEEKEQARLKMKKTRAFKFSSVRKTIGFFGKKKSVRRHATQQGILHSAIATIGVQSVDRPSTSTRVSVEDEEQGLTMKEMEEEHPLMTITESEETSF.

A helical membrane pass occupies residues 1-18 (MWIKLLFFFTTLLVSTSG). Topologically, residues 19–108 (LGDDGITALL…WHWDYVKNEL (90 aa)) are extracellular. A helical transmembrane segment spans residues 109-129 (VLTLFFIVIGLFKLVYHHTFV). Residues 130–132 (TRK) are Cytoplasmic-facing. The chain crosses the membrane as a helical span at residues 133-153 (ILPESCCLIFIGIAIGFFFVG). Residues 154 to 159 (DATHAS) lie on the Extracellular side of the membrane. A helical membrane pass occupies residues 160-180 (IKFLEFKSKVFFFYLLPPIIL). Residues 181-206 (ESAYSLKDRAFIENIGTILLYAVVGT) are Cytoplasmic-facing. Residues 207 to 227 (ILNIVLLAAALLILIWVGIMG) traverse the membrane as a helical segment. The Extracellular portion of the chain corresponds to 228 to 235 (KYNLSVMD). Residues 236-256 (ILTFASLVAAVDPVAVLAVFQ) form a helical membrane-spanning segment. Residues 257 to 262 (EVGVNK) are Cytoplasmic-facing. A helical transmembrane segment spans residues 263 to 283 (MLYFMVFGESLFNDAVTIVCY). At 284-299 (NLAIEFQTLPDFTWYH) the chain is on the extracellular side. The chain crosses the membrane as a helical span at residues 300 to 320 (GFLGLLSFLCVSIGGLIIGLI). Topologically, residues 321-350 (CGAISSFVTKFTTDVRVVEPVVLFGMAYLA) are cytoplasmic. A helical membrane pass occupies residues 351 to 371 (YLGSEMFHFSGIIALIACGLF). Topologically, residues 372 to 390 (QTHYACCNISYKSFTSVMY) are extracellular. The N-linked (GlcNAc...) asparagine glycan is linked to Asn379. The helical intramembrane region spans 391–411 (ITKVCSTLCESLIFIILGVML). The Extracellular segment spans residues 412-424 (VNEREWFWTDWHP). Residues 425 to 445 (VFSAVSVVLCVVVRFGVTFFL) traverse the membrane as a helical segment. The Cytoplasmic segment spans residues 446 to 464 (TYFVNQFTGGVRHISFQEQ). The helical transmembrane segment at 465–485 (FIMSYGGLRGAVSFSLVFMIS) threads the bilayer. Residues 486-492 (ANPDVKN) are Extracellular-facing. The helical transmembrane segment at 493 to 513 (TMLGATYAVILFTNIIQGSTI) threads the bilayer. Residues 514 to 783 (KLFVKWLNIR…TITESEETSF (270 aa)) are Cytoplasmic-facing. Positions 649-702 (DNEDADQRANELIKDVSSIRQLMHNPFEDCYLDRNLTHEEEKEQARLKMKKTRA) form a coiled coil. Residues 745 to 783 (RPSTSTRVSVEDEEQGLTMKEMEEEHPLMTITESEETSF) form a disordered region.

Belongs to the monovalent cation:proton antiporter 1 (CPA1) transporter (TC 2.A.36) family. In terms of assembly, interacts (via C-terminus) with cmd-1. As to expression, detected in the posterior cells of the intestine.

The protein localises to the basolateral cell membrane. In terms of biological role, na+/H+ exchanger which mediates the transient acidification of the coelomic space and plays a role in contraction of posterior body muscles during defecation. Probably by regulating the defecation motor program, required for fatty acid uptake by intestinal cells. The protein is Na(+)/H(+) exchanger protein 7 of Caenorhabditis elegans.